The following is a 188-amino-acid chain: UPF0398 protein OEOE_1093 (188 aa).

Belongs to the UPF0398 family.

This Oenococcus oeni (strain ATCC BAA-331 / PSU-1) protein is UPF0398 protein OEOE_1093.